A 367-amino-acid polypeptide reads, in one-letter code: Heparan sulfate glucosamine 3-O-sulfotransferase 2 (367 aa).

Residues 1-19 (MAYRVLGRAGPPQPRRARR) lie on the Cytoplasmic side of the membrane. The chain crosses the membrane as a helical; Signal-anchor for type II membrane protein span at residues 20 to 39 (LLFAFTLSLSCTYLCYSFLC). The Lumenal segment spans residues 40–367 (CCDGLGQSRL…ETVGQDFRWE (328 aa)). Residues 66–115 (LLAKSRPCDPPGPTPSEPSAPSAPAAAAPAPRLSGSNHSGSPKPGTKRLP) are disordered. A compositionally biased stretch (pro residues) spans 73–83 (CDPPGPTPSEP). The span at 84 to 96 (SAPSAPAAAAPAP) shows a compositional bias: low complexity. Residue Asn-102 is glycosylated (N-linked (GlcNAc...) asparagine). 124–128 (KGGTR) serves as a coordination point for 3'-phosphoadenylyl sulfate. Substrate-binding positions include 146-152 (EPHFFDR) and 177-180 (KTPS). N-linked (GlcNAc...) asparagine glycosylation occurs at Asn-193. Residues Arg-205 and Ser-213 each coordinate 3'-phosphoadenylyl sulfate. The N-linked (GlcNAc...) asparagine glycan is linked to Asn-235. Substrate is bound at residue 245-246 (WN). N-linked (GlcNAc...) asparagine glycosylation occurs at Asn-306. Cys-313 and Cys-325 form a disulfide bridge. 330–334 (KGRTH) lines the 3'-phosphoadenylyl sulfate pocket.

It belongs to the sulfotransferase 1 family.

It is found in the golgi apparatus membrane. The catalysed reaction is alpha-D-glucosaminyl-[heparan sulfate](n) + 3'-phosphoadenylyl sulfate = 3-sulfo-alpha-D-glucosaminyl-[heparan sulfate](n) + adenosine 3',5'-bisphosphate + H(+). Functionally, sulfotransferase that utilizes 3'-phospho-5'-adenylyl sulfate (PAPS) to catalyze the transfer of a sulfo group to an N-unsubstituted glucosamine linked to a 2-O-sulfo iduronic acid unit on heparan sulfate. Catalyzes the O-sulfation of glucosamine in GlcA2S-GlcNS. Unlike HS3ST1/3-OST-1, does not convert non-anticoagulant heparan sulfate to anticoagulant heparan sulfate. The sequence is that of Heparan sulfate glucosamine 3-O-sulfotransferase 2 (Hs3st2) from Mus musculus (Mouse).